Reading from the N-terminus, the 423-residue chain is Protein TylM3 (423 aa).

Residues 1-21 show a composition bias toward low complexity; sequence MNTAAGPTGTAAGGTTAPAAA. Disordered stretches follow at residues 1–26 and 117–149; these read MNTA…DLSR and GSAL…RDDP. Over residues 139-149 the composition is skewed to basic and acidic residues; the sequence is RPPDREERDDP.

It belongs to the cytochrome P450 family.

It participates in antibiotic biosynthesis; tylosin biosynthesis. In terms of biological role, involved in the biosynthesis of the macrolide antibiotic tylosin derived from the polyketide lactone tylactone. TylM3 is required for the glycosylation of the 5-hydroxyl group of tylactone to yield 5-O-mycaminosytylactone. This is Protein TylM3 from Streptomyces fradiae (Streptomyces roseoflavus).